A 525-amino-acid chain; its full sequence is Cytochrome P450 monooxygenase tpcC (525 aa).

A helical membrane pass occupies residues 13–33 (LPVTLVSLLVGSIFYFCYLTV). Heme is bound at residue Cys-457.

It belongs to the cytochrome P450 family. It depends on heme as a cofactor.

It is found in the membrane. It participates in secondary metabolite biosynthesis; terpenoid biosynthesis. Functionally, cytochrome P450 monooxygenase; part of the gene cluster that mediates the biosynthesis of terpestacin. The bifunctional terpene synthase tpcA converts isopentenyl diphosphate (IPP) and dimethylallyl diphosphate (DMAPP) into the sesterterpene preterpestacin I. The C-terminal prenyltransferase (PT) domain of tpcA catalyzes formation of GFPP, whereas the N-terminal terpene cyclase (TC) domain catalyzes the cyclization of GFPP into preterpestacin I. The cytochrome P450 monooxygenase tpcB then hydroxylates preterpestacin I to yield 24-hydroxypreterpstacin I (renamed as preterpestacin II) whereas the cytochrome P450 monooxygenase tpcC further hydroxylates preterpestacin II to yield 16,17-dihydroxypreterpestacin II (renamed as preterpestacin III). Finally, the FAD-dependent monooxygenase tpcD converts preterpestacin III into terpestacin. This Cochliobolus heterostrophus (strain C5 / ATCC 48332 / race O) (Southern corn leaf blight fungus) protein is Cytochrome P450 monooxygenase tpcC.